Here is a 214-residue protein sequence, read N- to C-terminus: 3-isopropylmalate dehydratase small subunit (214 aa).

This sequence belongs to the LeuD family. LeuD type 1 subfamily. As to quaternary structure, heterodimer of LeuC and LeuD.

It catalyses the reaction (2R,3S)-3-isopropylmalate = (2S)-2-isopropylmalate. It participates in amino-acid biosynthesis; L-leucine biosynthesis; L-leucine from 3-methyl-2-oxobutanoate: step 2/4. Catalyzes the isomerization between 2-isopropylmalate and 3-isopropylmalate, via the formation of 2-isopropylmaleate. This chain is 3-isopropylmalate dehydratase small subunit, found in Pseudomonas entomophila (strain L48).